Consider the following 189-residue polypeptide: Probable chorismate pyruvate-lyase (189 aa).

Substrate contacts are provided by Arg-77, Leu-115, and Glu-174.

The protein belongs to the UbiC family.

It localises to the cytoplasm. It carries out the reaction chorismate = 4-hydroxybenzoate + pyruvate. It participates in cofactor biosynthesis; ubiquinone biosynthesis. Removes the pyruvyl group from chorismate, with concomitant aromatization of the ring, to provide 4-hydroxybenzoate (4HB) for the ubiquinone pathway. The chain is Probable chorismate pyruvate-lyase from Shewanella sp. (strain MR-7).